Here is a 279-residue protein sequence, read N- to C-terminus: Probable endonuclease 4 (279 aa).

Histidine 66, histidine 106, glutamate 142, aspartate 176, histidine 179, histidine 213, aspartate 226, histidine 228, and glutamate 258 together coordinate Zn(2+).

The protein belongs to the AP endonuclease 2 family. The cofactor is Zn(2+).

The enzyme catalyses Endonucleolytic cleavage to 5'-phosphooligonucleotide end-products.. In terms of biological role, endonuclease IV plays a role in DNA repair. It cleaves phosphodiester bonds at apurinic or apyrimidinic (AP) sites, generating a 3'-hydroxyl group and a 5'-terminal sugar phosphate. The polypeptide is Probable endonuclease 4 (Photobacterium profundum (strain SS9)).